The chain runs to 395 residues: S-adenosylmethionine synthase (395 aa).

His-14 contacts ATP. Asp-16 contributes to the Mg(2+) binding site. Residue Glu-42 participates in K(+) binding. 2 residues coordinate L-methionine: Glu-55 and Gln-98. Residues 98–108 (QSPDIALGVDK) form a flexible loop region. Residues 174–176 (DGK), 240–241 (RF), Asp-249, 255–256 (RK), Ala-272, and Lys-276 contribute to the ATP site. L-methionine is bound at residue Asp-249. Lys-280 lines the L-methionine pocket.

This sequence belongs to the AdoMet synthase family. In terms of assembly, homotetramer; dimer of dimers. Mg(2+) is required as a cofactor. It depends on K(+) as a cofactor.

The protein localises to the cytoplasm. The catalysed reaction is L-methionine + ATP + H2O = S-adenosyl-L-methionine + phosphate + diphosphate. It functions in the pathway amino-acid biosynthesis; S-adenosyl-L-methionine biosynthesis; S-adenosyl-L-methionine from L-methionine: step 1/1. Functionally, catalyzes the formation of S-adenosylmethionine (AdoMet) from methionine and ATP. The overall synthetic reaction is composed of two sequential steps, AdoMet formation and the subsequent tripolyphosphate hydrolysis which occurs prior to release of AdoMet from the enzyme. The chain is S-adenosylmethionine synthase from Thermotoga neapolitana (strain ATCC 49049 / DSM 4359 / NBRC 107923 / NS-E).